We begin with the raw amino-acid sequence, 1045 residues long: Desmoglein-1 (1045 aa).

The signal sequence occupies residues 1–23 (MNWPFFRTAAVLFIFLVVLEVNS). Positions 24–49 (EFRIQVRDYNTKNGTIKWHSIRRQKR) are excised as a propeptide. N-linked (GlcNAc...) asparagine glycans are attached at residues Asn-36, Asn-110, and Asn-180. Cadherin domains follow at residues 50 to 158 (EWIK…PVFS), 159 to 270 (MSTF…PYME), 271 to 385 (LPSN…GSVF), and 386 to 496 (RPGS…TDGA). Residues 50–546 (EWIKFAAACR…HPLDNVHFGP (497 aa)) lie on the Extracellular side of the membrane. Residues 547–567 (AGIGLLIMGFLVLGLVPFLLM) form a helical membrane-spanning segment. The Cytoplasmic portion of the chain corresponds to 568 to 1045 (YCDCGGAPGG…TKYSTVQYTK (478 aa)). Desmoglein repeat repeat units lie at residues 814-840 (TYPS…TMTE), 841-870 (SYTT…ERVV), 871-900 (GPIS…ERVI), 901-928 (APNS…ERVI), and 929-957 (RPTS…ERVV). Residues 1019-1045 (FSNTLGSASPTTTRSRITKYSTVQYTK) are disordered. Residues 1020–1045 (SNTLGSASPTTTRSRITKYSTVQYTK) show a composition bias toward polar residues.

As to quaternary structure, binds to JUP/plakoglobin. Interacts with PKP2. Interacts with DSC3; there is evidence to suggest that the interaction promotes cell-cell adhesion of keratinocytes.

The protein localises to the cell membrane. Its subcellular location is the cell junction. It is found in the desmosome. The protein resides in the cytoplasm. It localises to the nucleus. Functionally, component of intercellular desmosome junctions. Involved in the interaction of plaque proteins and intermediate filaments mediating cell-cell adhesion. The polypeptide is Desmoglein-1 (DSG1) (Sus scrofa (Pig)).